The primary structure comprises 100 residues: MELTPREKDKLLLFTAGLVAERRLARGLKLNYPEAVALISCAIMEGARDGKTVAQLMSEGRTLLTAEQVMEGVPEMIKDIQVECTFPDGTKLVSIHDPIV.

This sequence belongs to the urease gamma subunit family. Heterotrimer of UreA (gamma), UreB (beta) and UreC (alpha) subunits. Three heterotrimers associate to form the active enzyme.

The protein localises to the cytoplasm. It catalyses the reaction urea + 2 H2O + H(+) = hydrogencarbonate + 2 NH4(+). Its pathway is nitrogen metabolism; urea degradation; CO(2) and NH(3) from urea (urease route): step 1/1. The chain is Urease subunit gamma from Escherichia coli.